We begin with the raw amino-acid sequence, 441 residues long: Tubulin alpha chain (441 aa).

Residues Gln11, Glu68, Ser137, Gly141, Thr142, Thr176, Asn203, and Asn224 each contribute to the GTP site. Glu68 is a Mg(2+) binding site. Glu250 is an active-site residue.

The protein belongs to the tubulin family. As to quaternary structure, dimer of alpha and beta chains. A typical microtubule is a hollow water-filled tube with an outer diameter of 25 nm and an inner diameter of 15 nM. Alpha-beta heterodimers associate head-to-tail to form protofilaments running lengthwise along the microtubule wall with the beta-tubulin subunit facing the microtubule plus end conferring a structural polarity. Microtubules usually have 13 protofilaments but different protofilament numbers can be found in some organisms and specialized cells. Mg(2+) serves as cofactor.

It localises to the cytoplasm. The protein resides in the cytoskeleton. It carries out the reaction GTP + H2O = GDP + phosphate + H(+). Tubulin is the major constituent of microtubules, a cylinder consisting of laterally associated linear protofilaments composed of alpha- and beta-tubulin heterodimers. Microtubules grow by the addition of GTP-tubulin dimers to the microtubule end, where a stabilizing cap forms. Below the cap, tubulin dimers are in GDP-bound state, owing to GTPase activity of alpha-tubulin. This is Tubulin alpha chain (TUB1) from Encephalitozoon cuniculi (strain GB-M1) (Microsporidian parasite).